Consider the following 150-residue polypeptide: Arginine repressor (150 aa).

It belongs to the ArgR family.

The protein localises to the cytoplasm. It participates in amino-acid biosynthesis; L-arginine biosynthesis [regulation]. Functionally, regulates arginine biosynthesis genes. The protein is Arginine repressor of Halothermothrix orenii (strain H 168 / OCM 544 / DSM 9562).